Here is a 420-residue protein sequence, read N- to C-terminus: Phosphoribosylamine--glycine ligase (420 aa).

Residues 108 to 314 form the ATP-grasp domain; sequence KQFMEKYAIP…FAALIAALLN (207 aa). ATP is bound at residue 134–195; the sequence is LDERGVPIVI…EDFLAGEEFS (62 aa). Mg(2+) contacts are provided by Glu284 and Asn286.

It belongs to the GARS family. The cofactor is Mg(2+). Mn(2+) is required as a cofactor.

It catalyses the reaction 5-phospho-beta-D-ribosylamine + glycine + ATP = N(1)-(5-phospho-beta-D-ribosyl)glycinamide + ADP + phosphate + H(+). Its pathway is purine metabolism; IMP biosynthesis via de novo pathway; N(1)-(5-phospho-D-ribosyl)glycinamide from 5-phospho-alpha-D-ribose 1-diphosphate: step 2/2. The polypeptide is Phosphoribosylamine--glycine ligase (Listeria innocua serovar 6a (strain ATCC BAA-680 / CLIP 11262)).